A 2856-amino-acid polypeptide reads, in one-letter code: Lipopolysaccharide-responsive and beige-like anchor protein (2856 aa).

Disordered stretches follow at residues 1–35 and 939–1107; these read MASEDNRAPSRPPTGDDGGGGGKEETPTEGGALSL and EQRK…DDDY. Ala-2 is subject to N-acetylalanine. Phosphoserine occurs at positions 10, 979, and 1003. Positions 991–1009 are enriched in polar residues; the sequence is ENSSIGRASSIDSASNTEL. Residues 1010-1026 are compositionally biased toward basic and acidic residues; it reads QTHDMSSDEKKVERENQ. Over residues 1073–1082 the composition is skewed to low complexity; it reads SEVSASISSP. Phosphoserine occurs at positions 1097, 1132, 1136, 1219, 1221, 1228, 1244, and 1258. Residues 1253–1296 are disordered; the sequence is FELKASTSTEAPQPQRHGLEISRQQEQTAQGTAPDAVDQQRRDS. The span at 1274–1283 shows a compositional bias: polar residues; that stretch reads SRQQEQTAQG. The stretch at 1298-1340 is one WD 1 repeat; sequence STMFRIPEFKWSQMHQRLLTDLLFSIETDIQMWRSHSTKTVMD. Phosphoserine is present on residues Ser-1487 and Ser-1497. Residues 1529–1545 form a helical membrane-spanning segment; sequence AQFLALAVVYFISVLMV. Disordered regions lie at residues 1556 to 1621 and 1750 to 1778; these read DERH…LGSG and SAVSVVSSVDPTHASDTGGESPGSRSPKC. Polar residues predominate over residues 1563–1573; the sequence is LKETSSDNGNA. The span at 1586-1601 shows a compositional bias: low complexity; it reads SSLTLSSVEESLEGTS. Residues Ser-1608, Ser-1770, Ser-1773, and Ser-2057 each carry the phosphoserine modification. Residues 2066–2174 enclose the BEACH-type PH domain; sequence NLAGPVSLST…TVKKVVNYLP (109 aa). The BEACH domain maps to 2193–2482; the sequence is ATPRQLFKAS…QLLIEPHPPR (290 aa). The residue at position 2489 (Ser-2489) is a Phosphoserine. WD repeat units lie at residues 2584 to 2626, 2629 to 2672, 2688 to 2728, 2770 to 2809, and 2812 to 2851; these read DQSI…LIQV, GHWD…SGIG, GHDY…RTLE, ETDDHIRAIQLSRDGQYLLTGGDNGVVIVRQVSDLKQLFA, and GCDAGIRAMALSFDQRCIISGMASGSIVLFYNDFNRWHHE.

As to quaternary structure, interacts with TOM1 and TOLLIP. In terms of tissue distribution, isoform 1 is expressed in the brain, is absent from the lung and the bone marrow and is less abundant in the spleen. Isoform 2 is expressed in the spleen, lung, brain and bone marrow. Isoform 3 is expressed in the brain, is absent from the bone marrow and is less abundant in the spleen and lung.

It localises to the cell membrane. The protein localises to the endoplasmic reticulum membrane. The protein resides in the golgi apparatus. Its subcellular location is the trans-Golgi network membrane. It is found in the lysosome membrane. Functionally, involved in coupling signal transduction and vesicle trafficking to enable polarized secretion and/or membrane deposition of immune effector molecules. Involved in phagophore growth during mitophagy by regulating ATG9A trafficking to mitochondria. The sequence is that of Lipopolysaccharide-responsive and beige-like anchor protein (Lrba) from Mus musculus (Mouse).